A 1488-amino-acid polypeptide reads, in one-letter code: Chromosome partition protein MukB (1488 aa).

Residue 34 to 41 (GGNGAGKS) coordinates ATP. Coiled-coil stretches lie at residues 326 to 418 (LEAD…QYNQ), 444 to 472 (LDTF…QTAH), and 509 to 602 (RHLA…RRAP). The interval 666–783 (PGGAEDQRLN…SLPIFGRAAR (118 aa)) is flexible hinge. Coiled coils occupy residues 835 to 923 (EAEI…AKLE), 977 to 1116 (EMLS…AKAG), and 1209 to 1265 (VEAI…LQSV). The disordered stretch occupies residues 1049-1074 (ADSGAEERARQRRDELHAQLSNNRSR). Basic and acidic residues predominate over residues 1051-1065 (SGAEERARQRRDELH).

The protein belongs to the SMC family. MukB subfamily. As to quaternary structure, homodimerization via its hinge domain. Binds to DNA via its C-terminal region. Interacts, and probably forms a ternary complex, with MukE and MukF via its C-terminal region. The complex formation is stimulated by calcium or magnesium. Interacts with tubulin-related protein FtsZ.

It is found in the cytoplasm. Its subcellular location is the nucleoid. In terms of biological role, plays a central role in chromosome condensation, segregation and cell cycle progression. Functions as a homodimer, which is essential for chromosome partition. Involved in negative DNA supercoiling in vivo, and by this means organize and compact chromosomes. May achieve or facilitate chromosome segregation by condensation DNA from both sides of a centrally located replisome during cell division. This Salmonella heidelberg (strain SL476) protein is Chromosome partition protein MukB.